The following is a 78-amino-acid chain: Acyl carrier protein (78 aa).

The Carrier domain occupies 2–77 (DNIVERVKKI…QAVDYILAGK (76 aa)). Residue Ser-37 is modified to O-(pantetheine 4'-phosphoryl)serine.

Belongs to the acyl carrier protein (ACP) family. In terms of processing, 4'-phosphopantetheine is transferred from CoA to a specific serine of apo-ACP by AcpS. This modification is essential for activity because fatty acids are bound in thioester linkage to the sulfhydryl of the prosthetic group.

The protein localises to the cytoplasm. The protein operates within lipid metabolism; fatty acid biosynthesis. Its function is as follows. Carrier of the growing fatty acid chain in fatty acid biosynthesis. This is Acyl carrier protein from Dechloromonas aromatica (strain RCB).